The sequence spans 47 residues: Glyceraldehyde-3-phosphate dehydrogenase, cytosolic (47 aa).

The protein belongs to the glyceraldehyde-3-phosphate dehydrogenase family. In terms of assembly, homotetramer.

It is found in the cytoplasm. The enzyme catalyses D-glyceraldehyde 3-phosphate + phosphate + NAD(+) = (2R)-3-phospho-glyceroyl phosphate + NADH + H(+). Its pathway is carbohydrate degradation; glycolysis; pyruvate from D-glyceraldehyde 3-phosphate: step 1/5. This is Glyceraldehyde-3-phosphate dehydrogenase, cytosolic from Pseudotsuga menziesii (Douglas-fir).